The chain runs to 622 residues: 1-deoxy-D-xylulose-5-phosphate synthase (622 aa).

Residues His74 and 115 to 117 (GHS) each bind thiamine diphosphate. Asp146 is a Mg(2+) binding site. Thiamine diphosphate is bound by residues 147–148 (GA), Asn175, Tyr286, and Glu366. Residue Asn175 participates in Mg(2+) binding.

This sequence belongs to the transketolase family. DXPS subfamily. As to quaternary structure, homodimer. Mg(2+) serves as cofactor. The cofactor is thiamine diphosphate.

It carries out the reaction D-glyceraldehyde 3-phosphate + pyruvate + H(+) = 1-deoxy-D-xylulose 5-phosphate + CO2. It participates in metabolic intermediate biosynthesis; 1-deoxy-D-xylulose 5-phosphate biosynthesis; 1-deoxy-D-xylulose 5-phosphate from D-glyceraldehyde 3-phosphate and pyruvate: step 1/1. Catalyzes the acyloin condensation reaction between C atoms 2 and 3 of pyruvate and glyceraldehyde 3-phosphate to yield 1-deoxy-D-xylulose-5-phosphate (DXP). This Carboxydothermus hydrogenoformans (strain ATCC BAA-161 / DSM 6008 / Z-2901) protein is 1-deoxy-D-xylulose-5-phosphate synthase.